The following is a 388-amino-acid chain: Protein SopA (388 aa).

This sequence belongs to the ParA family.

In terms of biological role, this protein is essential for plasmid partition. It ensures the proper distribution of newly replicated plasmids to daughter cells during cell division. SopA is trans-acting. In Escherichia coli O157:H7, this protein is Protein SopA (sopA).